Reading from the N-terminus, the 354-residue chain is Sulfate/thiosulfate import ATP-binding protein CysA (354 aa).

The ABC transporter domain maps to 3 to 237; sequence IEVRGLSKRF…PATPFVYGFL (235 aa). ATP is bound at residue 35-42; that stretch reads GPSGCGKT.

This sequence belongs to the ABC transporter superfamily. Sulfate/tungstate importer (TC 3.A.1.6) family. In terms of assembly, the complex is composed of two ATP-binding proteins (CysA), two transmembrane proteins (CysT and CysW) and a solute-binding protein (CysP).

It is found in the cell inner membrane. The catalysed reaction is sulfate(out) + ATP + H2O = sulfate(in) + ADP + phosphate + H(+). The enzyme catalyses thiosulfate(out) + ATP + H2O = thiosulfate(in) + ADP + phosphate + H(+). In terms of biological role, part of the ABC transporter complex CysAWTP involved in sulfate/thiosulfate import. Responsible for energy coupling to the transport system. This Bordetella bronchiseptica (strain ATCC BAA-588 / NCTC 13252 / RB50) (Alcaligenes bronchisepticus) protein is Sulfate/thiosulfate import ATP-binding protein CysA.